Consider the following 922-residue polypeptide: Chaperone protein ClpC, chloroplastic (922 aa).

The transit peptide at 1–72 directs the protein to the chloroplast; it reads MARVLAQSLS…RPGLDFHSKV (72 aa). The Clp R domain occupies 92-234; the sequence is FERFTEKAIK…RTQVIRMVGE (143 aa). 2 repeat regions span residues 95-160 and 170-234; these read FTEK…IGRG and FTPR…MVGE. Residues 255 to 502 form an i region; it reads LEEYGTNLTK…RVRLQHAQLP (248 aa). An ATP-binding site is contributed by 300–307; it reads GEPGVGKT. Residues 509 to 544 form the UVR domain; the sequence is DKEVRKIVKEKEEYVRNQDFEKAGELRDKEMDLKAQ. Positions 569 to 760 are II; it reads VTEVDIQHIV…LLIMTSNVGS (192 aa). 643–650 serves as a coordination point for ATP; the sequence is GPTGVGKS.

This sequence belongs to the ClpA/ClpB family. ClpC subfamily.

The protein resides in the plastid. Its subcellular location is the chloroplast. In terms of biological role, molecular chaperone that may interact with a ClpP-like protease involved in degradation of denatured proteins in the chloroplast. The polypeptide is Chaperone protein ClpC, chloroplastic (Pisum sativum (Garden pea)).